Here is a 496-residue protein sequence, read N- to C-terminus: Autophagy-related protein 21 (496 aa).

The segment at 41-86 is disordered; it reads SKKKTSNNNGSASNSESRNNEESILITNGSRDRTDAEEEEDNEDNA. Positions 46–57 are enriched in low complexity; sequence SNNNGSASNSES. The span at 75–84 shows a compositional bias: acidic residues; the sequence is DAEEEEDNED. Position 213 is a phosphothreonine (Thr-213). Position 237 is a phosphoserine (Ser-237). WD repeat units lie at residues 294-334, 346-385, and 448-488; these read VHKG…DYMS, TRLC…NSLP, and VNES…GECV. Residues 342-346 carry the L/FRRG motif motif; the sequence is FRRGT.

It belongs to the WD repeat PROPPIN family.

The protein localises to the cytoplasm. It is found in the vacuole. Its function is as follows. Required for cytoplasm to vacuole transport (Cvt) vesicles formation and mitophagy. Involved in binding of phosphatidylethanolamine to ATG8 and in recruitment of ATG8 and ATG5 to the pre-autophagosomal structure. Protects ATG8 from ARG4-mediated cleavage. Essential for maturation of proaminopeptidase I. This Saccharomyces cerevisiae (strain ATCC 204508 / S288c) (Baker's yeast) protein is Autophagy-related protein 21 (ATG21).